Consider the following 288-residue polypeptide: Energy-coupling factor transporter ATP-binding protein EcfA2 (288 aa).

The ABC transporter domain occupies 3-245 (IEFKNVDYIY…PDWLKKHFLD (243 aa)). 40–47 (GHTGSGKS) is a binding site for ATP.

Belongs to the ABC transporter superfamily. Energy-coupling factor EcfA family. Forms a stable energy-coupling factor (ECF) transporter complex composed of 2 membrane-embedded substrate-binding proteins (S component), 2 ATP-binding proteins (A component) and 2 transmembrane proteins (T component).

The protein localises to the cell membrane. Functionally, ATP-binding (A) component of a common energy-coupling factor (ECF) ABC-transporter complex. Unlike classic ABC transporters this ECF transporter provides the energy necessary to transport a number of different substrates. This chain is Energy-coupling factor transporter ATP-binding protein EcfA2, found in Lactobacillus gasseri (strain ATCC 33323 / DSM 20243 / BCRC 14619 / CIP 102991 / JCM 1131 / KCTC 3163 / NCIMB 11718 / NCTC 13722 / AM63).